The primary structure comprises 1624 residues: ATP-binding cassette sub-family A member 6 (1624 aa).

Residues 31 to 51 (LLEWSIPIIIGLHMGLFSYLA) traverse the membrane as a helical segment. N-linked (GlcNAc...) asparagine glycosylation is found at Asn-84 and Asn-91. 6 helical membrane passes run 222-242 (IFILFCLLYFSSFIYFASSNV), 267-287 (WGLIYVGFIFIISIFIAIIIT), 297-317 (FLVIFTLFFLYGLSLIAVTFL), 326-346 (VLTNLIVLFFTLFWGCVGFTV), 356-376 (EWVLSIFSPFAFTSGMAKVIF), and 395-415 (VMIAVFFILAFDSLLYLVLAL). The 236-residue stretch at 478 to 713 (IRIRNIKKEY…WGLGYHLSLF (236 aa)) folds into the ABC transporter 1 domain. Residue 514 to 521 (GHSGAGKS) coordinates ATP. Asn-576 carries N-linked (GlcNAc...) asparagine glycosylation. 8 helical membrane-spanning segments follow: residues 854–874 (AFLIILLLLGIALLPLVIEYV), 971–991 (LHCFPILMNVISNGILHMLNH), 1005–1025 (FIVLVWTGIQETCLFILCVIC), 1058–1078 (WCGQAVVDISLFSGMLLTSYF), 1094–1114 (IVFSVIVLALGCAASLVFLTY), 1130–1150 (WSICFLLVIAITFEKVANGPF), 1154–1174 (LVISATMLVPSFALNGLLVVL), and 1194–1214 (AVDLLLCLIPYIHTLLFIFVL). Residues 1282–1520 (LHKEYAGQKK…FGQDYVLELR (239 aa)) form the ABC transporter 2 domain. 1320-1327 (GPDGAGKS) contacts ATP.

This sequence belongs to the ABC transporter superfamily. ABCA family. Widely expressed with higher expression in heart, lung, brain, spleen and testis.

The protein resides in the golgi apparatus membrane. Probable transporter which may play a role in macrophage lipid transport and homeostasis. This chain is ATP-binding cassette sub-family A member 6 (Abca6), found in Mus musculus (Mouse).